The sequence spans 279 residues: Large ribosomal subunit protein uL2 (279 aa).

The disordered stretch occupies residues 216-279 (KRPSVRGVVM…IQKRKRNRNR (64 aa)). Residues 270–279 (IQKRKRNRNR) show a composition bias toward basic residues.

Belongs to the universal ribosomal protein uL2 family. Part of the 50S ribosomal subunit. Forms a bridge to the 30S subunit in the 70S ribosome.

Its function is as follows. One of the primary rRNA binding proteins. Required for association of the 30S and 50S subunits to form the 70S ribosome, for tRNA binding and peptide bond formation. It has been suggested to have peptidyltransferase activity; this is somewhat controversial. Makes several contacts with the 16S rRNA in the 70S ribosome. The sequence is that of Large ribosomal subunit protein uL2 from Leptospira interrogans serogroup Icterohaemorrhagiae serovar copenhageni (strain Fiocruz L1-130).